Reading from the N-terminus, the 185-residue chain is V-type ATP synthase subunit E (185 aa).

It belongs to the V-ATPase E subunit family.

In terms of biological role, produces ATP from ADP in the presence of a proton gradient across the membrane. The protein is V-type ATP synthase subunit E of Deinococcus geothermalis (strain DSM 11300 / CIP 105573 / AG-3a).